The following is a 326-amino-acid chain: Protein BCCIP homolog (326 aa).

Residues 37-81 (SHPEDCQCSDEDISFDEKQKIPNLPRKGKEEQVSDSSDEEDSQED) form a disordered region. Phosphoserine is present on Ser-45. A compositionally biased stretch (acidic residues) spans 72 to 81 (SSDEEDSQED).

The protein belongs to the BCP1 family.

The sequence is that of Protein BCCIP homolog from Arabidopsis thaliana (Mouse-ear cress).